The chain runs to 263 residues: Achaete-scute homolog 2 (263 aa).

Disordered stretches follow at residues 104–126 (RRRR…RNER) and 194–248 (PPSD…ELSP). Low complexity-rich tracts occupy residues 110–121 (ATEASSSSAAVA), 202–220 (PSAS…SPSP), and 230–247 (SPRS…GELS). The region spanning 118–170 (AAVARRNERERNRVKLVNLGFQALRQHVPHGGANKKLSKVETLRSAVEYIRAL) is the bHLH domain.

Efficient DNA binding requires dimerization with another basic helix-loop-helix (bHLH) protein. Forms heterodimers with bHLH transcription factor TCF3. May not heterodimerise with bHLH protein HAND1. Expressed in follicular T-helper (Tfh) cells.

It localises to the nucleus. Functionally, transcription factor. Binds to E-box motifs 5'-CANNTG-3' in the regulatory elements of target genes, probably as a heterodimer with another basic helix-loop-helix (bHLH) protein such as the transcription factor TCF3. May bind both open and closed chromatin, acting as a pioneer transcription factor to allow other factors to bind and activate lineage-specific genes. Required during post-implantation development for the generation of some differentiated trophoblast cell types. Transcriptional activity of ASCL2 may be antagonised in a subset of trophoblast cells by bHLH transcription factor HAND1, perhaps by competing for dimerization with other bHLH proteins. Involved in differentiation and function of follicular T-helper (Tfh) cells, thereby playing a role in germinal center responses; probably modulates expression of genes involved in Tfh cell function, such as BCL6. May also act as a suppressor of Th1-, Th2- and Th17-cell differentiation. Induces the formation of stem cells in intestinal crypts in vitro, synergistically activating transcription of target genes, such as SOX9, together with TCF4/beta-catenin. May form a bistable transcriptional switch, controlling expression of its own gene together with Wnt/R-spondin signaling, and thereby maintaining stem cell characteristics. Modulates expression of target genes, including perhaps down-regulating EGR1/Krox24 and chemokine CXCL10/Mob-1 and up-regulating CXCR4 and CDKN1C/p57kip2, in Schwann cells. May play a role in reducing proliferation of Schwann cells, perhaps acting via modulation of expression of CDKN1C. May be dispensable for blastocyst formation and later embryonic function. May be involved in the determination of neuronal precursors. This chain is Achaete-scute homolog 2 (Ascl2), found in Mus musculus (Mouse).